A 405-amino-acid chain; its full sequence is NAC transcription factor NAM-A1 (405 aa).

Low complexity predominate over residues 1–10; that stretch reads MGSSDSSSGS. Residues 1–38 are disordered; sequence MGSSDSSSGSAQKAARHQHEPPPPRQRGSAPELPPGFR. Residues 33-204 enclose the NAC domain; that stretch reads LPPGFRFHPT…DWVLCRIYKK (172 aa). The DNA-binding element occupies 137–210; the sequence is LGVKKALVFY…IYKKINKAAA (74 aa).

Expressed in flag leaves, green spikes and peduncles.

The protein resides in the nucleus. In terms of biological role, transcription factor of the NAC family associated with the grain protein content (GPC). Accelerates senescence and increases nutrient remobilization from leaves to developing grains. The tetraploid cultivated wheat (T.durum) contains one additional gene coding for a functional protein (NAM-B2) and one extra pseudogene (NAM-B1). The polypeptide is NAC transcription factor NAM-A1 (NAM-A1) (Triticum turgidum subsp. durum (Durum wheat)).